A 116-amino-acid chain; its full sequence is Putative anti-sigma factor antagonist BtrV (116 aa).

In terms of domain architecture, STAS spans 1 to 110; that stretch reads MKLTMDKIDG…NSREAAAAAF (110 aa). Ser-55 bears the Phosphoserine; by BtrW mark.

Belongs to the anti-sigma-factor antagonist family. As to quaternary structure, interacts with BtrW. In terms of processing, phosphorylated by BtrW. Dephosphorylated by BtrU.

Possible positive regulator of sigma-B activity. Non-phosphorylated BtrV binds to BtrW, preventing its association with an unknown partner(s) that might be sigma-B. When phosphorylated, releases BtrW, which is then free to complex with and inactivate its partner. Involved in type III secretion system (T3SS). In Bordetella bronchiseptica (strain ATCC BAA-588 / NCTC 13252 / RB50) (Alcaligenes bronchisepticus), this protein is Putative anti-sigma factor antagonist BtrV (btrV).